Reading from the N-terminus, the 669-residue chain is DNA ligase (669 aa).

NAD(+) contacts are provided by residues 34–38 (DAEYD), 83–84 (SL), and glutamate 113. Lysine 115 functions as the N6-AMP-lysine intermediate in the catalytic mechanism. Residues arginine 136, glutamate 170, lysine 286, and lysine 310 each contribute to the NAD(+) site. Residues cysteine 404, cysteine 407, cysteine 422, and cysteine 427 each coordinate Zn(2+). Residues 591–669 (IADSPFAGKT…EEALVKAISH (79 aa)) form the BRCT domain.

The protein belongs to the NAD-dependent DNA ligase family. LigA subfamily. Mg(2+) serves as cofactor. Requires Mn(2+) as cofactor.

The catalysed reaction is NAD(+) + (deoxyribonucleotide)n-3'-hydroxyl + 5'-phospho-(deoxyribonucleotide)m = (deoxyribonucleotide)n+m + AMP + beta-nicotinamide D-nucleotide.. In terms of biological role, DNA ligase that catalyzes the formation of phosphodiester linkages between 5'-phosphoryl and 3'-hydroxyl groups in double-stranded DNA using NAD as a coenzyme and as the energy source for the reaction. It is essential for DNA replication and repair of damaged DNA. This Halalkalibacterium halodurans (strain ATCC BAA-125 / DSM 18197 / FERM 7344 / JCM 9153 / C-125) (Bacillus halodurans) protein is DNA ligase.